The primary structure comprises 439 residues: MEKVKIIGGGLAGSEAAWQLAKRKIPVEIYEMRPIVTTPVHKTEYLAELVCSNSFKSTEITNASGLLKEEMRKLDSLLLRVAEETRVPAGVALAVDRELFSKRVQEILLESPYVTVIREEVKKLPKEGIVIVATGPLTSSDFAEHLMEVLDTDSLYFYDAVSPIIYADSINYEKVFSASRYGKGEETYLNCPMTKEEYERFVEELINAETVESHYPGEEKFFEGCLPIEVLAKRGIDTLRYGPMKPIGLIDPKTGKEPYAVVQLRPENIQKTLYSMVGFQTRLKFQEQRRIFRMIPGLENAEFARYGVMHRNTYFYAPKFLKATLQFIKDERVFFAGQLIGVEGYMESAAMGIVAGINAARLYKGKPLIILPPTTMIGALISYVTTKVPVRYYQPMNANWGILLPLDKPIKDKKLRNRLLAERALRDLEDVIRRFAINV.

8–13 provides a ligand contact to FAD; sequence GGGLAG.

It belongs to the MnmG family. TrmFO subfamily. Requires FAD as cofactor.

Its subcellular location is the cytoplasm. It catalyses the reaction uridine(54) in tRNA + (6R)-5,10-methylene-5,6,7,8-tetrahydrofolate + NADH + H(+) = 5-methyluridine(54) in tRNA + (6S)-5,6,7,8-tetrahydrofolate + NAD(+). It carries out the reaction uridine(54) in tRNA + (6R)-5,10-methylene-5,6,7,8-tetrahydrofolate + NADPH + H(+) = 5-methyluridine(54) in tRNA + (6S)-5,6,7,8-tetrahydrofolate + NADP(+). Its function is as follows. Catalyzes the folate-dependent formation of 5-methyl-uridine at position 54 (M-5-U54) in all tRNAs. The protein is Methylenetetrahydrofolate--tRNA-(uracil-5-)-methyltransferase TrmFO of Dictyoglomus turgidum (strain DSM 6724 / Z-1310).